A 231-amino-acid chain; its full sequence is Thiamine import ATP-binding protein ThiQ (231 aa).

Residues 2-230 (LHLDRLLIRQ…PPPALRAYLG (229 aa)) enclose the ABC transporter domain. 32 to 39 (GPSGGGKS) is an ATP binding site.

The protein belongs to the ABC transporter superfamily. Thiamine importer (TC 3.A.1.19.1) family. As to quaternary structure, the complex is composed of two ATP-binding proteins (ThiQ), two transmembrane proteins (ThiP) and a solute-binding protein (ThiB).

The protein resides in the cell inner membrane. It catalyses the reaction thiamine(out) + ATP + H2O = thiamine(in) + ADP + phosphate + H(+). Its function is as follows. Part of the ABC transporter complex ThiBPQ involved in thiamine import. Responsible for energy coupling to the transport system. This Cereibacter sphaeroides (strain ATCC 17023 / DSM 158 / JCM 6121 / CCUG 31486 / LMG 2827 / NBRC 12203 / NCIMB 8253 / ATH 2.4.1.) (Rhodobacter sphaeroides) protein is Thiamine import ATP-binding protein ThiQ.